We begin with the raw amino-acid sequence, 207 residues long: Glycerol-3-phosphate acyltransferase (207 aa).

Transmembrane regions (helical) follow at residues 3–23 (LIGL…VWVG), 54–74 (TIVM…PIVF), 81–101 (GTAT…VSIF), 122–142 (PIMF…TSIV), and 158–178 (LVFQ…FVFY).

Belongs to the PlsY family. In terms of assembly, probably interacts with PlsX.

The protein resides in the cell membrane. The catalysed reaction is an acyl phosphate + sn-glycerol 3-phosphate = a 1-acyl-sn-glycero-3-phosphate + phosphate. The protein operates within lipid metabolism; phospholipid metabolism. Catalyzes the transfer of an acyl group from acyl-phosphate (acyl-PO(4)) to glycerol-3-phosphate (G3P) to form lysophosphatidic acid (LPA). This enzyme utilizes acyl-phosphate as fatty acyl donor, but not acyl-CoA or acyl-ACP. In Levilactobacillus brevis (strain ATCC 367 / BCRC 12310 / CIP 105137 / JCM 1170 / LMG 11437 / NCIMB 947 / NCTC 947) (Lactobacillus brevis), this protein is Glycerol-3-phosphate acyltransferase.